A 341-amino-acid polypeptide reads, in one-letter code: Anthranilate phosphoribosyltransferase (341 aa).

5-phospho-alpha-D-ribose 1-diphosphate-binding positions include Gly85, Gly88–Asp89, Thr93, Asn95–Thr98, Lys113–Gly121, and Ser125. Residue Gly85 coordinates anthranilate. Ser97 contacts Mg(2+). An anthranilate-binding site is contributed by Asn116. Arg171 lines the anthranilate pocket. Mg(2+) is bound by residues Asp230 and Glu231.

Belongs to the anthranilate phosphoribosyltransferase family. Homodimer. It depends on Mg(2+) as a cofactor.

The catalysed reaction is N-(5-phospho-beta-D-ribosyl)anthranilate + diphosphate = 5-phospho-alpha-D-ribose 1-diphosphate + anthranilate. The protein operates within amino-acid biosynthesis; L-tryptophan biosynthesis; L-tryptophan from chorismate: step 2/5. In terms of biological role, catalyzes the transfer of the phosphoribosyl group of 5-phosphorylribose-1-pyrophosphate (PRPP) to anthranilate to yield N-(5'-phosphoribosyl)-anthranilate (PRA). The sequence is that of Anthranilate phosphoribosyltransferase from Prochlorococcus marinus (strain SARG / CCMP1375 / SS120).